Consider the following 1108-residue polypeptide: Multidrug resistance regulator 1 (1108 aa).

The segment covering 1–19 (MSIATTPIETPKSPKSTEP) has biased composition (polar residues). The segment at 1–27 (MSIATTPIETPKSPKSTEPQVRKRKKV) is disordered. A DNA-binding region (zn(2)-C6 fungal-type) is located at residues 31–59 (CTNCRKRKIRCDRQHPCNNCIKSKKHNAC). Polar residues predominate over residues 68–83 (PANFSTNGSSHGNTVP). 3 disordered regions span residues 68–138 (PANF…SENE), 968–990 (DQTY…LDSR), and 1021–1064 (AQQQ…YYGN). 2 stretches are compositionally biased toward basic and acidic residues: residues 86–104 (RPYE…EAPR) and 114–123 (NERKNSKKSP). Polar residues predominate over residues 124-138 (DNTVANNQQTASENE). The stretch at 134-165 (ASENEVTITLSELNMLKQRLQNIEANINAQSN) forms a coiled coil. Low complexity-rich tracts occupy residues 970 to 980 (TYSTSSESSST) and 1023 to 1041 (QQRQ…QSQS).

The protein resides in the nucleus. In terms of biological role, transcription factor that acts as the central regulator of the MDR1 efflux pump. Other target genes include those encoding oxidoreductases, whose up-regulation in fluconazole-resistant isolates may help to prevent cell damage resulting from the generation of toxic molecules in the presence of fluconazole and thereby contribute to drug resistance. This chain is Multidrug resistance regulator 1, found in Candida albicans (strain SC5314 / ATCC MYA-2876) (Yeast).